The primary structure comprises 512 residues: MTVTYTARVAKARFGGFSKLLLLWRGSIYKLLWRELLCFLGLFMALSAAYRFVLTEEQKRYFEKLVLYCDRYASLIPVSFVLGFYVTLVVHRWWNQYLSMPLTDALMCVVVGTVHGHDERGRLYRRTLMRYAGLSGVLILRSVSTAVFKRFPTIDHVVEAGFMTREERKKFENLNSSYNKYWVPCVWFCNLAAQARREGRIRDNGAFKLLLEELNVFRSKCGMLFHYDWISVPLVYTQVVTIAVYSYFLACLIGRQFLDPAQGYKDHDLDLCVPIFTLLQFFFYAGWLKVAEQLINPFGEDDDDFETNFLIDRCFQVSMLAVDEMYDDLAMLEKDLYWDAAEARAPYTAATAFLMQQPSFQGSTFDITLAKEDMQFQRQDGLEAPLNEAHGDFLQRLLPVGTGMGTGGLLGRRVPLLRRKNSHVSEESMAASCACAGAPDGAVPECGCEGPLVDLGQPEPESEPITGPESPALVPAPRAPSEPLTVVPLSGTRGPAPPWLPSPIGEEEESLA.

The Cytoplasmic portion of the chain corresponds to 1–31 (MTVTYTARVAKARFGGFSKLLLLWRGSIYKL). A10 lines the Ca(2+) pocket. Residues 32 to 51 (LWRELLCFLGLFMALSAAYR) traverse the membrane as a helical segment. Topologically, residues 52 to 60 (FVLTEEQKR) are extracellular. Residues 61–82 (YFEKLVLYCDRYASLIPVSFVL) traverse the membrane as a helical segment. The Cytoplasmic portion of the chain corresponds to 83 to 238 (GFYVTLVVHR…WISVPLVYTQ (156 aa)). A helical transmembrane segment spans residues 239–255 (VVTIAVYSYFLACLIGR). Residues 256–274 (QFLDPAQGYKDHDLDLCVP) lie on the Extracellular side of the membrane. Residues 275–288 (IFTLLQFFFYAGWL) traverse the membrane as a helical segment. Residues 289 to 512 (KVAEQLINPF…PIGEEEESLA (224 aa)) lie on the Cytoplasmic side of the membrane. Q293, N296, D301, and D304 together coordinate Ca(2+). The disordered stretch occupies residues 453 to 512 (VDLGQPEPESEPITGPESPALVPAPRAPSEPLTVVPLSGTRGPAPPWLPSPIGEEEESLA).

Belongs to the anion channel-forming bestrophin (TC 1.A.46) family. Calcium-sensitive chloride channel subfamily. As to quaternary structure, pentamer. Interacts with GLUL; this interaction tethers a fraction of GLUL to the membrane, causing a decrease of cytosolic glutamine synthase (GS) activity and inhibits the chloride channel activity of BEST2 by affecting the gating at the aperture in the absence of intracellular glutamate.

It is found in the cell membrane. It localises to the basolateral cell membrane. It carries out the reaction chloride(in) = chloride(out). It catalyses the reaction iodide(out) = iodide(in). The catalysed reaction is hydrogencarbonate(in) = hydrogencarbonate(out). The enzyme catalyses L-glutamate(out) = L-glutamate(in). It carries out the reaction L-glutamine(out) = L-glutamine(in). Its activity is regulated as follows. Chloride channel activity is allosterically inhibited by GLUL/glutamine synthase (GS) which affects the gating at the aperture in the absence of intracellular glutamate. Inhibitory effect of GLUL is relieved upon increasing of intracellular level of L-glutamate. Its function is as follows. Ligand-gated anion channel that allows the movement of anions across cell membranes when activated by calcium (Ca2+). Transports a large specter of anions, namely mediates the movement of chloride, L-glutamate and iodide. Calcium-binding triggers the dilation of the aperture, but calcium-dependent gating is only effective when the size of the passing anion is bigger than the closed aperture. Mediates the calcium-activated hydrogencarbonate movement and participates in colonic hydrogencarbonate secretion concomitant with mucin secretion. In non-pigmented epithelium (NPE), mediates the efflux of intracellular L-glutamate; binding of intracellular L-glutamate activates and open both the neck and the aperture of the channel, leading to L-glutamate exit promoting chloride influx movement from the extracellular side in trans. Also exhibits a directional permeability for intracellular glutamine, in a similar manner as for L-glutamate. This chain is Bestrophin-2, found in Bos taurus (Bovine).